A 1419-amino-acid chain; its full sequence is Collagen alpha-1(II) chain (1419 aa).

An N-terminal signal peptide occupies residues 1-25 (MIRLGAPQSLVLLTLLIATVLQCQG). Residues 26–113 (QDARKLGPKG…PGLGGGNFAA (88 aa)) constitute a propeptide, N-terminal propeptide. A disordered region spans residues 28–1168 (ARKLGPKGQK…GQREKGPDPL (1141 aa)). 2 stretches are compositionally biased toward basic and acidic residues: residues 36–47 (QKGEPGDIKDII) and 64–85 (PRGD…RDGE). Residues 89–104 (PGNPGPPGPPGPPGPP) show a composition bias toward pro residues. Lysine 122 bears the 5-hydroxylysine mark. O-linked (Gal...) hydroxylysine glycosylation occurs at lysine 122. The segment covering 124–135 (GGAQMGVMQGPM) has biased composition (low complexity). The triple-helical region stretch occupies residues 133–1146 (GPMGPMGPRG…PGPPGPPGPP (1014 aa)). A compositionally biased stretch (pro residues) spans 140–149 (PRGPPGPAGA). Low complexity predominate over residues 150–171 (PGPQGFQGNPGEPGEPGVSGPI). Positions 183-197 (PGDDGEAGKPGKAGE) are enriched in basic and acidic residues. 5-hydroxylysine occurs at positions 219, 231, and 240. O-linked (Gal...) hydroxylysine glycosylation is found at lysine 219, lysine 231, and lysine 240. Composition is skewed to low complexity over residues 242-252 (ESGSPGENGSP) and 267-282 (TGPA…DGQP). The segment covering 292-301 (GPAGGPGFLG) has biased composition (gly residues). Lysine 306 carries the post-translational modification 5-hydroxylysine. Lysine 306 carries an O-linked (Gal...) hydroxylysine glycan. Residues 335–363 (PAGASGNPGTDGIPGAKGSAGAPGIAGAP) are compositionally biased toward low complexity. Residues 365-374 (FPGPRGPPGP) are compositionally biased toward pro residues. Low complexity predominate over residues 404-417 (ETGPAGPQGAPGPA). 5-hydroxylysine is present on residues lysine 540 and lysine 552. O-linked (Gal...) hydroxylysine glycosylation is found at lysine 540 and lysine 552. Residues 554–563 (LAGAPGLRGL) show a composition bias toward low complexity. A 4-hydroxyproline mark is found at proline 591 and proline 600. Proline 602 carries the post-translational modification 3-hydroxyproline; partial. 4-hydroxyproline occurs at positions 603 and 606. Over residues 638–668 (ERGSPGAQGLQGPRGLPGTPGTDGPKGAAGP) the composition is skewed to low complexity. Residues 696-707 (KGDRGDVGEKGP) show a composition bias toward basic and acidic residues. Composition is skewed to low complexity over residues 765–780 (AGFA…PGAK) and 809–846 (PTGV…NGNP). Proline 839 carries the 3-hydroxyproline; partial modification. 4-hydroxyproline is present on residues proline 840, proline 846, and proline 852. The span at 1001 to 1011 (APGPPGSPGPA) shows a compositional bias: pro residues. Basic and acidic residues predominate over residues 1047–1061 (RGDKGEAGEPGERGL). Proline 1076 is subject to 3-hydroxyproline; partial. Composition is skewed to low complexity over residues 1080–1089 (SGDQGTSGPA) and 1103–1113 (PSGKDGSNGIP). The residue at position 1113 (proline 1113) is a 4-hydroxyproline. The residue at position 1118 (proline 1118) is a 3-hydroxyproline. Proline 1119 carries the 4-hydroxyproline modification. The segment covering 1131 to 1148 (AGPPGNPGPPGPPGPPGP) has biased composition (pro residues). Proline 1133 bears the 3-hydroxyproline; partial mark. A 4-hydroxyproline mark is found at proline 1134 and proline 1137. Residue proline 1139 is modified to 3-hydroxyproline; partial. A 4-hydroxyproline mark is found at proline 1140 and proline 1143. Proline 1145 is subject to 3-hydroxyproline; partial. Proline 1146 is modified (4-hydroxyproline). The segment at 1147–1173 (GPGIDMSAFAGLGQREKGPDPLQYMRA) is nonhelical region (C-terminal). The region spanning 1185-1419 (VEVDATLKSL…GVDIGPVCFL (235 aa)) is the Fibrillar collagen NC1 domain. Cystine bridges form between cysteine 1215–cysteine 1247, cysteine 1255–cysteine 1417, and cysteine 1325–cysteine 1370. Ca(2+)-binding residues include aspartate 1233, asparagine 1235, glutamine 1236, cysteine 1238, and aspartate 1241. Asparagine 1320 carries N-linked (GlcNAc...) asparagine glycosylation.

Belongs to the fibrillar collagen family. Homotrimers of alpha 1(II) chains. Contains mostly 4-hydroxyproline. Prolines at the third position of the tripeptide repeating unit (G-X-P) are 4-hydroxylated in some or all of the chains. In terms of processing, contains 3-hydroxyproline at a few sites. This modification occurs on the first proline residue in the sequence motif Gly-Pro-Hyp, where Hyp is 4-hydroxyproline. Post-translationally, lysine residues at the third position of the tripeptide repeating unit (G-X-Y) are 5-hydroxylated in some or all of the chains. O-glycosylated on hydroxylated lysine residues. The O-linked glycan consists of a Glc-Gal disaccharide. Expressed in chondrocytes.

Its subcellular location is the secreted. It localises to the extracellular space. It is found in the extracellular matrix. In terms of biological role, type II collagen is specific for cartilaginous tissues. It is essential for the normal embryonic development of the skeleton, for linear growth and for the ability of cartilage to resist compressive forces. This is Collagen alpha-1(II) chain from Rattus norvegicus (Rat).